The following is a 423-amino-acid chain: Phosphoribosylamine--glycine ligase (423 aa).

The 208-residue stretch at 107–314 (KAFMAKYNIP…LSDLVEAAID (208 aa)) folds into the ATP-grasp domain. 133-194 (VNQKGAPIVI…EDFLQGEEAS (62 aa)) provides a ligand contact to ATP. Positions 284 and 286 each coordinate Mg(2+).

Belongs to the GARS family. Mg(2+) is required as a cofactor. Requires Mn(2+) as cofactor.

It catalyses the reaction 5-phospho-beta-D-ribosylamine + glycine + ATP = N(1)-(5-phospho-beta-D-ribosyl)glycinamide + ADP + phosphate + H(+). It functions in the pathway purine metabolism; IMP biosynthesis via de novo pathway; N(1)-(5-phospho-D-ribosyl)glycinamide from 5-phospho-alpha-D-ribose 1-diphosphate: step 2/2. In Neisseria meningitidis serogroup B (strain ATCC BAA-335 / MC58), this protein is Phosphoribosylamine--glycine ligase.